A 380-amino-acid chain; its full sequence is Probable inorganic pyrophosphatase (380 aa).

Positions 198, 203, and 235 each coordinate Mg(2+).

This sequence belongs to the PPase family. Requires Mg(2+) as cofactor.

The catalysed reaction is diphosphate + H2O = 2 phosphate + H(+). In Plasmodium falciparum (isolate 3D7), this protein is Probable inorganic pyrophosphatase.